Here is a 569-residue protein sequence, read N- to C-terminus: Alpha-amylase (569 aa).

Residues 1-28 (MARKTVAAALALVAGAAVAVTGNAPAQA) form the signal peptide. Residues asparagine 120, glutamine 166, and aspartate 175 each coordinate Ca(2+). Residue aspartate 205 is the Nucleophile of the active site. Histidine 209 is a binding site for Ca(2+). The active-site Proton donor is the glutamate 232. Residues 468–569 (TTPPATSGAS…QLVLNDTFRS (102 aa)) form the CBM20 domain.

The protein belongs to the glycosyl hydrolase 13 family. In terms of assembly, monomer. It depends on Ca(2+) as a cofactor.

It catalyses the reaction Endohydrolysis of (1-&gt;4)-alpha-D-glucosidic linkages in polysaccharides containing three or more (1-&gt;4)-alpha-linked D-glucose units.. This chain is Alpha-amylase (aml), found in Streptomyces violaceus (Streptomyces venezuelae).